The chain runs to 111 residues: UPF0235 protein glr3835 (111 aa).

It belongs to the UPF0235 family.

This Gloeobacter violaceus (strain ATCC 29082 / PCC 7421) protein is UPF0235 protein glr3835.